Consider the following 310-residue polypeptide: Probable endonuclease 4 (310 aa).

A disordered region spans residues 1-31 (MNNQQSRGALGTSGATPDLPDATPGLSRNPV). Residues H94, H134, E173, D207, H210, H244, D257, H259, and E289 each contribute to the Zn(2+) site.

This sequence belongs to the AP endonuclease 2 family. Zn(2+) is required as a cofactor.

The catalysed reaction is Endonucleolytic cleavage to 5'-phosphooligonucleotide end-products.. Endonuclease IV plays a role in DNA repair. It cleaves phosphodiester bonds at apurinic or apyrimidinic (AP) sites, generating a 3'-hydroxyl group and a 5'-terminal sugar phosphate. This Streptomyces avermitilis (strain ATCC 31267 / DSM 46492 / JCM 5070 / NBRC 14893 / NCIMB 12804 / NRRL 8165 / MA-4680) protein is Probable endonuclease 4.